A 152-amino-acid chain; its full sequence is Endoribonuclease YbeY (152 aa).

H116, H120, and H126 together coordinate Zn(2+).

Belongs to the endoribonuclease YbeY family. Requires Zn(2+) as cofactor.

Its subcellular location is the cytoplasm. Single strand-specific metallo-endoribonuclease involved in late-stage 70S ribosome quality control and in maturation of the 3' terminus of the 16S rRNA. In Mycoplasma mobile (strain ATCC 43663 / 163K / NCTC 11711) (Mesomycoplasma mobile), this protein is Endoribonuclease YbeY.